We begin with the raw amino-acid sequence, 11197 residues long: Nonribosomal peptide synthetase 5 (11197 aa).

The tract at residues 19 to 413 (AQRARKQPDA…DGTLQVVGHK (395 aa)) is adenylation (A) domain 1. A disordered region spans residues 426–452 (HASSSASSVGETPGVTGPISTPMGDSV). The interval 690 to 897 (KQLRQFCQEQ…LMDESMKQQI (208 aa)) is condensation (C) domain 1. Positions 918-1310 (DAAQDYPDAP…GRHDGQLKVR (393 aa)) are adenylation (A) domain 2. The 77-residue stretch at 1446–1522 (ADRSPVHMML…DMANNIAISE (77 aa)) folds into the Carrier 1 domain. S1483 is subject to O-(pantetheine 4'-phosphoryl)serine. The condensation (C) domain 2 stretch occupies residues 1952–2380 (VEDVYPCSPV…SDISLMDPLS (429 aa)). The adenylation (A) domain 3 stretch occupies residues 2406–2805 (VARIEPDKMA…QRKDTQIKIR (400 aa)). The region spanning 2945 to 3021 (DSLTSTEVTI…SLAAFVDYDS (77 aa)) is the Carrier 2 domain. S2982 carries the post-translational modification O-(pantetheine 4'-phosphoryl)serine. Positions 3041-3481 (EESFALSPIQ…TSTMKSEFTL (441 aa)) are epimerase (E) domain 1. Positions 3515 to 3957 (EEIFPCSPMQ…VSPETRCELD (443 aa)) are condensation (C) domain 3. The adenylation (A) domain 4 stretch occupies residues 3976–4371 (FEQQVEKIPD…RRRDNQVKVR (396 aa)). Residues 4508 to 4584 (RKLTPMEQQL…ELANHARFKA (77 aa)) form the Carrier 3 domain. At S4545 the chain carries O-(pantetheine 4'-phosphoryl)serine. Positions 4603-5022 (FPLLPIQRMF…LNEYTAALRS (420 aa)) are epimerase (E) domain 2. Residues 5069 to 5501 (ESIYPCSPLQ…LVGDSERQGL (433 aa)) form a condensation (C) domain 4 region. The segment at 5521–5918 (EAQVKAIPDN…RRKDTQVKVR (398 aa)) is adenylation (A) domain 5. The region spanning 6068-6141 (SEAEDIIRAV…ALAQFVSQST (74 aa)) is the Carrier 4 domain. S6102 is subject to O-(pantetheine 4'-phosphoryl)serine. The segment at 6162-6512 (FSLSPIQQMF…MEILFNYFGQ (351 aa)) is epimerase (E) domain 3. The interval 6636-7076 (EEIFPCSPIQ…LVGAETRREM (441 aa)) is condensation (C) domain 5. The tract at residues 7097 to 7491 (ERNSQAMPDR…RRRDNQVKVR (395 aa)) is adenylation (A) domain 6. The 77-residue stretch at 7636–7712 (KPKTKMEEHF…DLAGRSRFKN (77 aa)) folds into the Carrier 5 domain. S7673 is modified (O-(pantetheine 4'-phosphoryl)serine). Residues 7733-8162 (ALLPIQRLFF…KYMLETLASQ (430 aa)) are epimerase (E) domain 4. The condensation (C) domain 6 stretch occupies residues 8205-8638 (EASYPCSPLQ…MLGDSGRKRI (434 aa)). Residues 8660–8832 (EAHVKESPNR…DHRATATEIV (173 aa)) form an adenylation (A) domain 7 region. In terms of domain architecture, Carrier 6 spans 9173-9248 (SAQTAVVQII…AMAAKAQQIG (76 aa)). S9209 is modified (O-(pantetheine 4'-phosphoryl)serine). The segment at 9565–9683 (RVKDMRRAIP…LHEVVSALQK (119 aa)) is epimerase (E) domain 5. The tract at residues 9721–10116 (VEDVYPTSPM…LVPAKHMEQL (396 aa)) is condensation (C) domain 7. The adenylation (A) domain 8 stretch occupies residues 10136 to 10529 (DDMVRSTPTA…VGRKDTQIKI (394 aa)). In terms of domain architecture, Carrier 7 spans 10663 to 10749 (LDSSDYVAMQ…TLAVTIKADM (87 aa)). S10708 is modified (O-(pantetheine 4'-phosphoryl)serine). The interval 10806–11104 (NFLVTGSTGF…SLRPMSGPEW (299 aa)) is thioesterase (TE) domain.

Belongs to the NRP synthetase family.

It functions in the pathway secondary metabolite biosynthesis. Its function is as follows. Nonribosomal peptide synthetase; part of the Fg3_54/C64 gene cluster that mediates the biosynthesis of the octapeptide fusaoctaxin A, a virulence factor that is required for cell-to-cell invasiveness of plant host. The 2 nonribosomal peptide synthetases NRPS9 and NRPS5 form an assembly line which likely utilizes GABA as a starter unit (loaded on the unique module M1 of NRPS9) and sequentially incorporates seven extender units composed of the residues L-Ala, L-allo-Ile, L-Ser, L-Val, L-Ser, L-Leu and L-Leu, respectively. During the process, each of the residues that are tethered on modules M3-M7 of NRPS5 containing an E domain can undergo an epimerization reaction to produce a D-configuration before the transpeptidation reaction occurs. The elongation of the peptidyl chain might be terminated by module M8-mediated L-Leu incorporation, followed by R domain-catalyzed 4 electron reduction to release the resulting octapeptide from the assembly line as an alcohol. Fusaoctaxin A is cleaved by the cluster specific ABC transporter FGM5 to the pentapeptide fusapentaxin A and the tripeptide fusatrixin A. The other enzymes from the cluster, FGM1, FGM2, FGM3 and FGM9 seem not to be involved in the biosynthesis of fusaoctaxin A and their functions have still to be determined. The chain is Nonribosomal peptide synthetase 5 from Gibberella zeae (strain ATCC MYA-4620 / CBS 123657 / FGSC 9075 / NRRL 31084 / PH-1) (Wheat head blight fungus).